The primary structure comprises 210 residues: Uracil phosphoribosyltransferase (210 aa).

Residues arginine 78, arginine 103, and 130–138 (DPMLATGGS) contribute to the 5-phospho-alpha-D-ribose 1-diphosphate site. Uracil contacts are provided by residues isoleucine 193 and 198-200 (GDA). 5-phospho-alpha-D-ribose 1-diphosphate is bound at residue aspartate 199.

It belongs to the UPRTase family. Requires Mg(2+) as cofactor.

It carries out the reaction UMP + diphosphate = 5-phospho-alpha-D-ribose 1-diphosphate + uracil. The protein operates within pyrimidine metabolism; UMP biosynthesis via salvage pathway; UMP from uracil: step 1/1. Its activity is regulated as follows. Allosterically activated by GTP. Functionally, catalyzes the conversion of uracil and 5-phospho-alpha-D-ribose 1-diphosphate (PRPP) to UMP and diphosphate. The chain is Uracil phosphoribosyltransferase from Salinibacter ruber (strain DSM 13855 / M31).